The chain runs to 508 residues: Heat shock 70 kDa protein 14 (508 aa).

Belongs to the heat shock protein 70 family. As to quaternary structure, component of ribosome-associated complex (RAC).

It is found in the cytoplasm. Its subcellular location is the cytosol. Its function is as follows. Component of the ribosome-associated complex (RAC), a complex involved in folding or maintaining nascent polypeptides in a folding-competent state. The chain is Heat shock 70 kDa protein 14 (hspa14) from Xenopus tropicalis (Western clawed frog).